The chain runs to 117 residues: NADH-ubiquinone oxidoreductase chain 3 (117 aa).

Transmembrane regions (helical) follow at residues 1–21 (MLSLTYIVGIASALVIILLLV), 56–76 (FFLVAILFLLFDLEIALILPY), and 86–106 (TFYNYWLVMLLVVVLTFGLMY).

It belongs to the complex I subunit 3 family.

It localises to the mitochondrion membrane. It carries out the reaction a ubiquinone + NADH + 5 H(+)(in) = a ubiquinol + NAD(+) + 4 H(+)(out). Its function is as follows. Core subunit of the mitochondrial membrane respiratory chain NADH dehydrogenase (Complex I) that is believed to belong to the minimal assembly required for catalysis. Complex I functions in the transfer of electrons from NADH to the respiratory chain. The immediate electron acceptor for the enzyme is believed to be ubiquinone. In Branchiostoma lanceolatum (Common lancelet), this protein is NADH-ubiquinone oxidoreductase chain 3 (ND3).